The primary structure comprises 379 residues: Beta sliding clamp (379 aa).

The protein belongs to the beta sliding clamp family. As to quaternary structure, forms a ring-shaped head-to-tail homodimer around DNA which binds and tethers DNA polymerases and other proteins to the DNA. The DNA replisome complex has a single clamp-loading complex (3 tau and 1 each of delta, delta', psi and chi subunits) which binds 3 Pol III cores (1 core on the leading strand and 2 on the lagging strand) each with a beta sliding clamp dimer. Additional proteins in the replisome are other copies of gamma, psi and chi, Ssb, DNA helicase and RNA primase.

The protein resides in the cytoplasm. Its function is as follows. Confers DNA tethering and processivity to DNA polymerases and other proteins. Acts as a clamp, forming a ring around DNA (a reaction catalyzed by the clamp-loading complex) which diffuses in an ATP-independent manner freely and bidirectionally along dsDNA. Initially characterized for its ability to contact the catalytic subunit of DNA polymerase III (Pol III), a complex, multichain enzyme responsible for most of the replicative synthesis in bacteria; Pol III exhibits 3'-5' exonuclease proofreading activity. The beta chain is required for initiation of replication as well as for processivity of DNA replication. This chain is Beta sliding clamp (dnaN), found in Rickettsia felis (strain ATCC VR-1525 / URRWXCal2) (Rickettsia azadi).